Here is a 372-residue protein sequence, read N- to C-terminus: Queuine tRNA-ribosyltransferase (372 aa).

Catalysis depends on Asp89, which acts as the Proton acceptor. Substrate contacts are provided by residues 89 to 93 (DSGGF), Asp161, and Gly232. Residues 262–268 (GIGDLPS) are RNA binding. The active-site Nucleophile is Asp281. Residues 286–290 (TKAAR) are RNA binding; important for wobble base 34 recognition. Zn(2+) contacts are provided by Cys319, Cys321, Cys324, and His351.

This sequence belongs to the queuine tRNA-ribosyltransferase family. Homodimer. Within each dimer, one monomer is responsible for RNA recognition and catalysis, while the other monomer binds to the replacement base PreQ1. Zn(2+) is required as a cofactor.

It carries out the reaction 7-aminomethyl-7-carbaguanine + guanosine(34) in tRNA = 7-aminomethyl-7-carbaguanosine(34) in tRNA + guanine. Its pathway is tRNA modification; tRNA-queuosine biosynthesis. In terms of biological role, catalyzes the base-exchange of a guanine (G) residue with the queuine precursor 7-aminomethyl-7-deazaguanine (PreQ1) at position 34 (anticodon wobble position) in tRNAs with GU(N) anticodons (tRNA-Asp, -Asn, -His and -Tyr). Catalysis occurs through a double-displacement mechanism. The nucleophile active site attacks the C1' of nucleotide 34 to detach the guanine base from the RNA, forming a covalent enzyme-RNA intermediate. The proton acceptor active site deprotonates the incoming PreQ1, allowing a nucleophilic attack on the C1' of the ribose to form the product. After dissociation, two additional enzymatic reactions on the tRNA convert PreQ1 to queuine (Q), resulting in the hypermodified nucleoside queuosine (7-(((4,5-cis-dihydroxy-2-cyclopenten-1-yl)amino)methyl)-7-deazaguanosine). This chain is Queuine tRNA-ribosyltransferase, found in Chlamydia felis (strain Fe/C-56) (Chlamydophila felis).